Here is a 193-residue protein sequence, read N- to C-terminus: Phosphoheptose isomerase (193 aa).

One can recognise an SIS domain in the interval 37-193 (IAQSFKNEKK…LIIEKEMQKN (157 aa)). Residue 52 to 54 (NGG) coordinates substrate. Positions 61 and 65 each coordinate Zn(2+). Substrate contacts are provided by residues Glu-65, 93–94 (ND), 119–121 (STS), Ser-124, and Gln-172. Residues Gln-172 and His-180 each contribute to the Zn(2+) site.

Belongs to the SIS family. GmhA subfamily. As to quaternary structure, homotetramer. The cofactor is Zn(2+).

The protein resides in the cytoplasm. It catalyses the reaction 2 D-sedoheptulose 7-phosphate = D-glycero-alpha-D-manno-heptose 7-phosphate + D-glycero-beta-D-manno-heptose 7-phosphate. It participates in carbohydrate biosynthesis; D-glycero-D-manno-heptose 7-phosphate biosynthesis; D-glycero-alpha-D-manno-heptose 7-phosphate and D-glycero-beta-D-manno-heptose 7-phosphate from sedoheptulose 7-phosphate: step 1/1. Its function is as follows. Catalyzes the isomerization of sedoheptulose 7-phosphate in D-glycero-D-manno-heptose 7-phosphate. The sequence is that of Phosphoheptose isomerase from Buchnera aphidicola subsp. Acyrthosiphon pisum (strain 5A).